The primary structure comprises 542 residues: Protein NODULATION SIGNALING PATHWAY 1 (542 aa).

The disordered stretch occupies residues 73-150 (TSTTSLEPCG…SNCNSGNSKE (78 aa)). Positions 92 to 103 (LPKKRNATDESS) are enriched in basic and acidic residues. Over residues 136-148 (AKANGSNCNSGNS) the composition is skewed to low complexity. Residues 145–532 (SGNSKEGRWA…QPVSFCSLWK (388 aa)) form the GRAS domain. Residues 152-214 (RWAEQLLNPC…HLSSSSSSPT (63 aa)) form a leucine repeat I (LRI) region. The tract at residues 233 to 332 (LLKFYEVSPW…GYNYYPRLLG (100 aa)) is VHIID. Positions 269-273 (LHILD) match the VHIID motif. A leucine repeat II (LRII) region spans residues 333 to 357 (YAQSININLQINRIENHSLQTLNAQ). The PFYRE stretch occupies residues 367-452 (LIVCAQFRLH…RESDERRVME (86 aa)). Positions 455-532 (AAKALTNQRE…QPVSFCSLWK (78 aa)) are SAW.

This sequence belongs to the GRAS family. As to expression, highly expressed in roots.

It localises to the nucleus. Transcriptional regulator essential for Nod-factor-induced gene expression. Acts downstream of calcium spiking and a calcium/calmodulin-dependent protein kinase required for activation of early nodulation gene expression. Acts as a common symbiosis gene that positively contributes to the early steps of the arbuscular mycorrhizal fungus and rhizobial infection processes in roots. Transcription factor involved in the positive regulation of the beta-carotene isomerase D27, which participates in a pathway leading to biosynthesis of strigolactones in roots. The chain is Protein NODULATION SIGNALING PATHWAY 1 from Lotus japonicus (Lotus corniculatus var. japonicus).